The following is a 221-amino-acid chain: 5'-nucleotidase (221 aa).

The Nucleophile role is filled by aspartate 14.

This sequence belongs to the HAD-like hydrolase superfamily. The cofactor is Mn(2+). Mg(2+) serves as cofactor.

The catalysed reaction is a ribonucleoside 5'-phosphate + H2O = a ribonucleoside + phosphate. Its function is as follows. Specifically dephosphorylates nucleoside 5'-monophosphates to nucleosides and inorganic phosphate. Displays high activity toward 5'-UMP and 5'-IMP, significant activity against 5'-XMP and 5'-TMP, and low activity against 5'-CMP. The sequence is that of 5'-nucleotidase from Pseudomonas aeruginosa (strain ATCC 15692 / DSM 22644 / CIP 104116 / JCM 14847 / LMG 12228 / 1C / PRS 101 / PAO1).